A 731-amino-acid chain; its full sequence is Pre-B-cell leukemia transcription factor-interacting protein 1 (731 aa).

Residues 1-10 (MASCPDSDNS) are compositionally biased toward polar residues. The segment at 1–155 (MASCPDSDNS…SSSDDDTDVD (155 aa)) is disordered. A Phosphoserine modification is found at Ser43. Composition is skewed to polar residues over residues 62–75 (LFQTESPQSGSILT) and 121–132 (LEGQSPPQSLPS). Ser129, Ser146, Ser147, and Ser148 each carry phosphoserine. Position 152 is a phosphothreonine (Thr152). Positions 270–348 (LLLDKLAKEN…QGLEADCVRG (79 aa)) form a coiled coil. Disordered stretches follow at residues 354-377 (LSGGRGPQGDKAIREQGPREQEPE), 447-572 (GQDP…DPLP), and 698-731 (LKKRSGKKDKHSQSPRAAGPREGHSHSHHHHHRG). Over residues 364–375 (KAIREQGPREQE) the composition is skewed to basic and acidic residues. Positions 377-417 (ELSFLKQKEQLEAEAQALRQELERQRRLLGSVQQDLERSLQ) form a coiled coil. Basic and acidic residues-rich tracts occupy residues 472-499 (WSGKEKWWDGQRDRKAEHWKHKKEESGR), 508-543 (QEDREPAGRWKEGRPRVEESGSKKEGKRQGPKEPPR), and 551-569 (SGEKQKQPRWREGTKDSHD). Positions 485 to 505 (RKAEHWKHKKEESGRERKKNW) match the Nuclear localization signal motif. Residue Ser567 is modified to Phosphoserine. A Nuclear localization signal motif is present at residues 695-720 (DKALKKRSGKKDKHSQSPRAAGPREG). Over residues 698-707 (LKKRSGKKDK) the composition is skewed to basic residues.

Interacts with TEX11. Interacts with ESR1, PBX1, PBX2 and PBX3. Expressed in early hematopoietic precursors.

Its subcellular location is the cytoplasm. The protein localises to the cytoskeleton. It is found in the nucleus. Its function is as follows. Regulator of pre-B-cell leukemia transcription factors (BPXs) function. Inhibits the binding of PBX1-HOX complex to DNA and blocks the transcriptional activity of E2A-PBX1. Tethers estrogen receptor-alpha (ESR1) to microtubules and allows them to influence estrogen receptors-alpha signaling. The protein is Pre-B-cell leukemia transcription factor-interacting protein 1 (PBXIP1) of Homo sapiens (Human).